A 118-amino-acid polypeptide reads, in one-letter code: Large ribosomal subunit protein uL24 (118 aa).

Residues 1–24 (MSEQPHKQRTRTKRASLHEKQDQV) form a disordered region.

The protein belongs to the universal ribosomal protein uL24 family. As to quaternary structure, part of the 50S ribosomal subunit.

In terms of biological role, one of two assembly initiator proteins, it binds directly to the 5'-end of the 23S rRNA, where it nucleates assembly of the 50S subunit. Located at the polypeptide exit tunnel on the outside of the subunit. The polypeptide is Large ribosomal subunit protein uL24 (Halobacterium salinarum (strain ATCC 700922 / JCM 11081 / NRC-1) (Halobacterium halobium)).